Here is a 280-residue protein sequence, read N- to C-terminus: Ribosomal RNA large subunit methyltransferase J (280 aa).

Residues H19, H42, S100, E118, 143–144, and D164 contribute to the S-adenosyl-L-methionine site; that span reads DG. D164 acts as the Proton acceptor in catalysis.

It belongs to the RlmJ family. As to quaternary structure, monomer.

It catalyses the reaction adenosine(2030) in 23S rRNA + S-adenosyl-L-methionine = N(6)-methyladenosine(2030) in 23S rRNA + S-adenosyl-L-homocysteine + H(+). Specifically methylates the adenine in position 2030 of 23S rRNA. Nascent 23S rRNA seems to be the natural substrate. Appears to be not necessary for ribosome assembly. Required for the utilization of extracellular DNA as the sole source of carbon and energy. The sequence is that of Ribosomal RNA large subunit methyltransferase J from Escherichia coli (strain K12).